A 143-amino-acid chain; its full sequence is Actin-depolymerizing factor 5 (143 aa).

The region spanning 11-143 is the ADF-H domain; the sequence is GMRVTDECTS…GFDIIQDRAK (133 aa).

This sequence belongs to the actin-binding proteins ADF family. Expressed exclusively in root tip meristem.

It is found in the cytoplasm. It localises to the cytoskeleton. Functionally, actin-depolymerizing protein. Severs actin filaments (F-actin) and binds to actin monomers. The polypeptide is Actin-depolymerizing factor 5 (ADF5) (Arabidopsis thaliana (Mouse-ear cress)).